Reading from the N-terminus, the 1044-residue chain is R3H domain-containing protein 2 (1044 aa).

2 disordered regions span residues 23–71 and 106–147; these read EESV…AKSN and SCPS…QEYT. Over residues 36-56 the composition is skewed to basic and acidic residues; sequence PSKEDVEKEGEENGLRQETQR. At serine 37 the chain carries Phosphoserine. Residues 58–71 show a composition bias toward basic residues; the sequence is TSSHGHARKRAKSN. Over residues 109-143 the composition is skewed to basic and acidic residues; it reads SDKEEEKSTKDVSEKEDKDKSKEKVPRKMLSRDSS. Serine 143 carries the phosphoserine modification. An R3H domain is found at 169–232; the sequence is RMMLLKLEQE…AVIINKTSST (64 aa). The SUZ domain maps to 233 to 303; that stretch reads RIPEQRFSEH…VRERIFARET (71 aa). Basic and acidic residues-rich tracts occupy residues 261–270 and 277–288; these read DASMDRDDNQ and DGRRSKSIEERE. Disordered stretches follow at residues 261 to 288, 320 to 408, 433 to 485, 502 to 533, 551 to 600, 729 to 770, and 807 to 848; these read DASMDRDDNQMRVPLQDGRRSKSIEERE, SSSS…LSRP, CTAQ…FSPS, MAEDLSNPFGQMSLSRQGSTEAADPSSALFQP, GQPL…SNQQ, GTSP…SPSG, and GQKP…SLSN. Over residues 338 to 349 the composition is skewed to low complexity; that stretch reads SRTSSSRQSSTD. Phosphoserine is present on residues serine 362, serine 365, and serine 381. Residues 433 to 449 are compositionally biased toward low complexity; the sequence is CTAQQQQQQQQQQQQLP. 2 stretches are compositionally biased toward polar residues: residues 509 to 521 and 554 to 572; these read PFGQMSLSRQGST and LPTSNYSTSSHAPPTQQVL. Over residues 757-770 the composition is skewed to low complexity; it reads PQMSQQYSGVSPSG. Residues 818-848 show a composition bias toward polar residues; sequence GSPQANAQMGSSPVTSPTQSPAPSPVTSLSN. Residues serine 921 and serine 923 each carry the phosphoserine modification. 2 positions are modified to phosphothreonine: threonine 924 and threonine 928.

It localises to the nucleus. This chain is R3H domain-containing protein 2 (R3hdm2), found in Mus musculus (Mouse).